The sequence spans 727 residues: Non-structural protein 4 (727 aa).

Disordered regions lie at residues 1 to 38 (MNQS…PSEG) and 673 to 727 (SMTL…KLSK). The segment covering 17 to 38 (RTPSALSSNSETPGSMSSPSEG) has biased composition (polar residues). Residues 712–727 (SRRKARKARAASKLSK) are compositionally biased toward basic residues.

The sequence is that of Non-structural protein 4 from Rice dwarf virus (isolate Akita) (RDV).